A 145-amino-acid polypeptide reads, in one-letter code: Peptide methionine sulfoxide reductase MsrB (145 aa).

Residues 6-129 enclose the MsrB domain; sequence EEELKQTLTD…NAAALRFVPV (124 aa). Catalysis depends on Cys118, which acts as the Nucleophile.

It belongs to the MsrB Met sulfoxide reductase family.

It catalyses the reaction L-methionyl-[protein] + [thioredoxin]-disulfide + H2O = L-methionyl-(R)-S-oxide-[protein] + [thioredoxin]-dithiol. The protein is Peptide methionine sulfoxide reductase MsrB of Enterococcus faecalis (strain ATCC 700802 / V583).